Here is a 723-residue protein sequence, read N- to C-terminus: Bifunctional lysine-specific demethylase and histidyl-hydroxylase NO66 (723 aa).

2 disordered regions span residues 13–34 (KKTA…QKAA) and 48–213 (SAVK…APSC). The span at 14–31 (KTAKKPAKKTTKQNRQKQ) shows a compositional bias: basic residues. The segment covering 49-72 (AVKQNNGAKGKAKANGVKGNAKAQ) has biased composition (low complexity). Composition is skewed to acidic residues over residues 88–106 (ESVD…EDNE) and 114–129 (EDDY…EFEE). A compositionally biased stretch (low complexity) spans 133–155 (NSPSGSCSCSASSGSSNTENSPP). The segment covering 190-199 (EQKEGKELSK) has biased composition (basic and acidic residues). A compositionally biased stretch (low complexity) spans 204 to 213 (KSAPAAAPSC). Positions 379 to 518 (NPSTYLKGLR…NLMEALMPAV (140 aa)) constitute a JmjC domain. Fe cation is bound by residues histidine 419, aspartate 421, and histidine 484.

Belongs to the ROX family. NO66 subfamily. The cofactor is Fe(2+).

Its subcellular location is the nucleus. The enzyme catalyses N(6),N(6)-dimethyl-L-lysyl(36)-[histone H3] + 2 2-oxoglutarate + 2 O2 = L-lysyl(36)-[histone H3] + 2 formaldehyde + 2 succinate + 2 CO2. Oxygenase that can act as both a histone lysine demethylase and a ribosomal histidine hydroxylase. Specifically demethylates 'Lys-4' (H3K4me) and 'Lys-36' (H3K36me) of histone H3, thereby playing a central role in histone code. The sequence is that of Bifunctional lysine-specific demethylase and histidyl-hydroxylase NO66 from Drosophila grimshawi (Hawaiian fruit fly).